The following is a 147-amino-acid chain: Hemoglobin subunit beta-2 (147 aa).

A Globin domain is found at 3–147 (EWTDSERAII…VVSALGRQYH (145 aa)). Heme b-binding residues include H64 and H93.

Belongs to the globin family. In terms of assembly, hb 3 is a heterotetramer of two alpha-2 and two beta-2 chains. As to expression, red blood cells.

Involved in oxygen transport from gills to the various peripheral tissues. In Boreogadus saida (Polar cod), this protein is Hemoglobin subunit beta-2 (hbb2).